The primary structure comprises 111 residues: Aspartate 1-decarboxylase (111 aa).

The active-site Schiff-base intermediate with substrate; via pyruvic acid is serine 25. Serine 25 carries the post-translational modification Pyruvic acid (Ser). Position 57 (threonine 57) interacts with substrate. Tyrosine 58 acts as the Proton donor in catalysis. 73–75 (GPA) contacts substrate.

This sequence belongs to the PanD family. Heterooctamer of four alpha and four beta subunits. Pyruvate is required as a cofactor. Is synthesized initially as an inactive proenzyme, which is activated by self-cleavage at a specific serine bond to produce a beta-subunit with a hydroxyl group at its C-terminus and an alpha-subunit with a pyruvoyl group at its N-terminus.

It is found in the cytoplasm. The catalysed reaction is L-aspartate + H(+) = beta-alanine + CO2. The protein operates within cofactor biosynthesis; (R)-pantothenate biosynthesis; beta-alanine from L-aspartate: step 1/1. Its function is as follows. Catalyzes the pyruvoyl-dependent decarboxylation of aspartate to produce beta-alanine. The protein is Aspartate 1-decarboxylase of Francisella tularensis subsp. tularensis (strain FSC 198).